The sequence spans 670 residues: uncharacterized protein (670 aa).

A run of 10 helical transmembrane segments spans residues 23 to 42 (YALRNTIAMCLALTVAYYLN), 47 to 69 (YWAMTSAAVVSFPTVGGVISKSL), 76 to 98 (LLGAIAALLLAGHTLNEPWFFLL), 118 to 140 (VAYAFQLAGYTAAIIAFPMVNIT), 153 to 170 (VCEVIVGILCGGMMMMIL), 381 to 403 (QWDAGANALTLAAISCVLYSAVA), 410 to 432 (SLLMRTLVLLSLFSFVVKFGLMV), 437 to 454 (LWQFLLFLFPLLATMQLL), 461 to 483 (FAALWGQLIVFMGSFIAVTNPPV), and 493 to 510 (NLAKIVGVALAWLAFAIL).

It belongs to the aromatic acid exporter ArAE (TC 2.A.85) family.

It localises to the cell membrane. This is an uncharacterized protein from Escherichia coli O157:H7.